Reading from the N-terminus, the 336-residue chain is Eukaryotic translation initiation factor 3 subunit I (336 aa).

6 WD repeats span residues 8–49 (GHER…GTYN), 50–91 (GHNG…KAWE), 93–135 (PTAI…GPQP), 144–183 (PIGSKAQVVAFSSLDKHLITGHENGKVALWDVNTGEEVAS), 187–226 (NHIGLITDLQMSADRTYFVTSSKDKSARLYDSRTLEVIKS), and 285–324 (GGFGPCNSIAVHPEGKGYAIGGEDGYVRLHHFDENTFRAK).

Belongs to the eIF-3 subunit I family. In terms of assembly, component of the eukaryotic translation initiation factor 3 (eIF-3) complex.

It localises to the cytoplasm. Component of the eukaryotic translation initiation factor 3 (eIF-3) complex, which is involved in protein synthesis of a specialized repertoire of mRNAs and, together with other initiation factors, stimulates binding of mRNA and methionyl-tRNAi to the 40S ribosome. The eIF-3 complex specifically targets and initiates translation of a subset of mRNAs involved in cell proliferation. This is Eukaryotic translation initiation factor 3 subunit I from Puccinia graminis f. sp. tritici (strain CRL 75-36-700-3 / race SCCL) (Black stem rust fungus).